Reading from the N-terminus, the 282-residue chain is MADLQGKAVLTIAVPEAKADQIEAEILRLRAATTEAGSVQLEQFDRLEQVFLAPSSYDVIFSGHIALPAKSHADSALAKLAAALKPGGRLALRESLNSRNETALRSALTMGGFVNVQVSTSEHALEAHADKPVYEVGAAAPLKLSFAKKKQSGAAAPAAQVAEVWTIATDDFDDDDLLENDGDELLDAEDLALATTAPEGDDCEVGAGGKRRACKNCTCGRADAEAEQAAKPTLTGPLPASSCGNCYLGDAFRCASCPYLGMPAFKPGEKVTLSDRQLKADA.

The segment at 1–140 (MADLQGKAVL…KPVYEVGAAA (140 aa)) is N-terminal SAM-like domain. The tract at residues 141 to 192 (PLKLSFAKKKQSGAAAPAAQVAEVWTIATDDFDDDDLLENDGDELLDAEDLA) is linker. [2Fe-2S] cluster-binding residues include Cys203, Cys214, Cys217, and Cys219. A fe-S binding site A region spans residues 203-219 (CEVGAGGKRRACKNCTC). [4Fe-4S] cluster-binding residues include Cys243, Cys246, Cys254, and Cys257. 2 consecutive short sequence motifs (cx2C motif) follow at residues 243–246 (CGNC) and 254–257 (CASC). The interval 243–257 (CGNCYLGDAFRCASC) is fe-S binding site B.

Belongs to the anamorsin family. As to quaternary structure, monomer. Requires [2Fe-2S] cluster as cofactor. [4Fe-4S] cluster is required as a cofactor.

It is found in the cytoplasm. The protein localises to the mitochondrion intermembrane space. Its function is as follows. Component of the cytosolic iron-sulfur (Fe-S) protein assembly (CIA) machinery. Required for the maturation of extramitochondrial Fe-S proteins. Part of an electron transfer chain functioning in an early step of cytosolic Fe-S biogenesis, facilitating the de novo assembly of a [4Fe-4S] cluster on the cytosolic Fe-S scaffold complex. Electrons are transferred from NADPH via a FAD- and FMN-containing diflavin oxidoreductase. Together with the diflavin oxidoreductase, also required for the assembly of the diferric tyrosyl radical cofactor of ribonucleotide reductase (RNR), probably by providing electrons for reduction during radical cofactor maturation in the catalytic small subunit. The polypeptide is Anamorsin homolog (Monosiga brevicollis (Choanoflagellate)).